The primary structure comprises 141 residues: Protein C19orf12 (141 aa).

Residues 40 to 60 (FVGGLVGGPPGLAVGGAVGGL) form a helical membrane-spanning segment.

Belongs to the C19orf12 family.

It is found in the mitochondrion. The protein resides in the mitochondrion membrane. Its subcellular location is the endoplasmic reticulum. It localises to the cytoplasm. The protein localises to the cytosol. The sequence is that of Protein C19orf12 (C19orf12) from Homo sapiens (Human).